The sequence spans 63 residues: Large ribosomal subunit protein bL28 (63 aa).

This sequence belongs to the bacterial ribosomal protein bL28 family.

This Desulforudis audaxviator (strain MP104C) protein is Large ribosomal subunit protein bL28.